A 315-amino-acid polypeptide reads, in one-letter code: Secreted mono- and diacylglycerol lipase LIP2 (315 aa).

The N-terminal stretch at 1 to 21 (MACFRVILYLSVIFFVQCVFA) is a signal peptide. Cys-68 and Cys-308 are disulfide-bonded. Asn-74 carries an N-linked (GlcNAc...) asparagine glycan. Ser-182 (nucleophile) is an active-site residue. The active site involves Asp-240. Asn-265 is a glycosylation site (N-linked (GlcNAc...) asparagine). His-292 is an active-site residue.

Belongs to the AB hydrolase superfamily. Lipase family. Class 3 subfamily.

It localises to the secreted. It catalyses the reaction a monoacylglycerol + H2O = glycerol + a fatty acid + H(+). The catalysed reaction is a diacylglycerol + H2O = a monoacylglycerol + a fatty acid + H(+). Its function is as follows. Secreted lipase involved in Dandruff and seborrheic dermatitis (D/SD) probably via lipase-mediated breakdown of sebaceous lipids and release of irritating free fatty acids. Shows activity against monoglyceride and diglyceride substrates and generates free oleic acid from the substrates mono- and diolein. Able to cleave the oleic acid from both the 1 and the 2 position of the glycerol backbone as 1,2 isomers of diolein were converted into oleic acid and glycerol. Due to an absence of fatty acid synthase genes in Malassezia species, secretory lipases are essential for the yeast to generate free fatty acids from degradation of sebum and assimilate them as lipid sources for growth. Plays an essential role at the pathogen-host interface during disease progression. Also performs the reverse reaction to build diacylglycerols from monoacylglycerols. The sequence is that of Secreted mono- and diacylglycerol lipase LIP2 from Malassezia restricta (strain ATCC 96810 / NBRC 103918 / CBS 7877) (Seborrheic dermatitis infection agent).